The primary structure comprises 463 residues: Glycine--tRNA ligase (463 aa).

Residues Arg98 and Glu174 each contribute to the substrate site. ATP-binding positions include 206 to 208 (RNE), 216 to 221 (FRTREF), 290 to 291 (EL), and 334 to 337 (GADR). 221–225 (FEQME) contacts substrate. 330-334 (EPSLG) serves as a coordination point for substrate.

This sequence belongs to the class-II aminoacyl-tRNA synthetase family. As to quaternary structure, homodimer.

It localises to the cytoplasm. It carries out the reaction tRNA(Gly) + glycine + ATP = glycyl-tRNA(Gly) + AMP + diphosphate. Its function is as follows. Catalyzes the attachment of glycine to tRNA(Gly). This Staphylococcus epidermidis (strain ATCC 35984 / DSM 28319 / BCRC 17069 / CCUG 31568 / BM 3577 / RP62A) protein is Glycine--tRNA ligase.